We begin with the raw amino-acid sequence, 267 residues long: Putative phosphatase bbp_030 (267 aa).

Asp8 functions as the Nucleophile in the catalytic mechanism. A Mg(2+)-binding site is contributed by Asp8. Phosphate is bound at residue Leu9. Position 10 (Asp10) interacts with Mg(2+). Phosphate is bound by residues 42–43 (TG) and Lys191. A Mg(2+)-binding site is contributed by Asp214. Asn217 contributes to the phosphate binding site.

This sequence belongs to the HAD-like hydrolase superfamily. Cof family. Mg(2+) serves as cofactor.

This is Putative phosphatase bbp_030 from Buchnera aphidicola subsp. Baizongia pistaciae (strain Bp).